The sequence spans 777 residues: MSAQTSLAEKGLNPGLMCQESYACSGTDEAIFECDECCSLQCLRCEEELHRQERLRNHERIRLKAGHVPYCDPCKGPNGHSPGVRQRAAVRCQTCKINLCLECQKRTHSGGNKRRHPITVYLVSKVQESLEGEEMDEETKRKKMTERVVSFLLVDENEEIQVTNEEDFIRKLDCKPDQHLKVVSIFGNTGDGKSHTLNHTFFYGREVFKTSPAQESCTVGVWAAYDPVHKVAVIDTEGLLGATVNLSQRTRLLLKVLAISDLVIYRTHADRLHNDLFKFLGDASEAYLKHFTKELKATTARCGLDVPLSTLGPAVIIFHETVHTQLLGSDHPSEAPEKLIQDRFRKLGRFPEAFSSIHYKGTRTYNPPTDFSGLRRALEQLLENNTTRSPRHPGVIFKALKALSDRFSGEIPDDQMAHSSFFPDEYFTCSSLCLSCGAGCKNSMNHGKEGVPHEAKSRCRYSHQYDNRVYTCKACYERGKEVSVVPKTSASTDSPWMGLAKYAWSGYVIECPNCGVVYRSRQYWFGNQDPVDTVVRTEIVHVWPGTDAFLKDNNNAAQRLLDGMNFMAQSVSELSLGPTKAVTSWLTDQIAPAYWRPNSQILSCNQCATSFKDNDTKHHCRACGEGFCDSCSSKTRPVPERGWGPAPVRVCDSCYDARNVQLDVTEAQADDEGGTLIARKVGEAVQNTLGAVVTAIDIPLGLVKDAARPAYWVPDHEILHCHNCRKEFSVKLSKHHCRACGQGFCDECSHDCRAVPSRGWDHPVRVCFNCNKKPGDL.

Residues 416–777 (MAHSSFFPDE…FNCNKKPGDL (362 aa)) are required for localization in the lipid droplets. 2 consecutive FYVE-type zinc fingers follow at residues 598-659 (NSQI…DARN) and 715-775 (DHEI…KKPG). Residues Cys604, Cys607, Cys620, Cys623, Cys628, Cys631, Cys651, Cys654, Cys721, Cys724, Cys737, Cys740, Cys745, Cys748, Cys767, and Cys770 each coordinate Zn(2+).

In terms of assembly, interacts with RAB18 (in GTP-bound form). Interacts with BSCL2 in a RAB18-dependent manner. Interacts with ZW10. As to expression, ubiquitous.

It localises to the golgi apparatus. The protein localises to the golgi stack. The protein resides in the endoplasmic reticulum. Its subcellular location is the preautophagosomal structure. It is found in the lipid droplet. It localises to the mitochondrion. Functionally, plays a role in the formation of lipid droplets (LDs) which are storage organelles at the center of lipid and energy homeostasis. Regulates the morphology, size and distribution of LDs. Mediates the formation of endoplasmic reticulum-lipid droplets (ER-LD) contact sites by forming a complex with RAB18 and ZW10. Binds to phosphatidylinositol 3-phosphate (PtdIns3P) through FYVE-type zinc finger. This Mus musculus (Mouse) protein is Zinc finger FYVE domain-containing protein 1 (Zfyve1).